We begin with the raw amino-acid sequence, 82 residues long: Large ribosomal subunit protein bL28 (82 aa).

The segment at 1 to 25 (MAKVDQITKKRAMTGNTRSHALNHS) is disordered.

Belongs to the bacterial ribosomal protein bL28 family.

The protein is Large ribosomal subunit protein bL28 of Malacoplasma penetrans (strain HF-2) (Mycoplasma penetrans).